A 430-amino-acid chain; its full sequence is Histidine--tRNA ligase (430 aa).

The protein belongs to the class-II aminoacyl-tRNA synthetase family. As to quaternary structure, homodimer.

It is found in the cytoplasm. The enzyme catalyses tRNA(His) + L-histidine + ATP = L-histidyl-tRNA(His) + AMP + diphosphate + H(+). This chain is Histidine--tRNA ligase, found in Acinetobacter baumannii (strain ACICU).